A 328-amino-acid polypeptide reads, in one-letter code: Tyrosine recombinase XerC (328 aa).

The Core-binding (CB) domain occupies 13–100; the sequence is QAPHPQIAAY…AWRGWFKWMA (88 aa). In terms of domain architecture, Tyr recombinase spans 122-319; the sequence is RLPKALSVEQ…DFQHLAKIYD (198 aa). Active-site residues include Arg-162, Lys-197, His-271, Arg-274, and His-297. Tyr-306 acts as the O-(3'-phospho-DNA)-tyrosine intermediate in catalysis.

This sequence belongs to the 'phage' integrase family. XerC subfamily. In terms of assembly, forms a cyclic heterotetrameric complex composed of two molecules of XerC and two molecules of XerD.

The protein localises to the cytoplasm. In terms of biological role, site-specific tyrosine recombinase, which acts by catalyzing the cutting and rejoining of the recombining DNA molecules. The XerC-XerD complex is essential to convert dimers of the bacterial chromosome into monomers to permit their segregation at cell division. It also contributes to the segregational stability of plasmids. In Ralstonia pickettii (strain 12J), this protein is Tyrosine recombinase XerC.